The sequence spans 148 residues: Large ribosomal subunit protein bL9 (148 aa).

The protein belongs to the bacterial ribosomal protein bL9 family.

Binds to the 23S rRNA. This is Large ribosomal subunit protein bL9 from Salinispora arenicola (strain CNS-205).